The chain runs to 469 residues: Glutamine synthetase (469 aa).

One can recognise a GS beta-grasp domain in the interval Asn14–Thr98. In terms of domain architecture, GS catalytic spans Pro106–Gly469. 2 residues coordinate Mg(2+): Glu131 and Glu133. ATP is bound at residue Glu209. Positions 214 and 221 each coordinate Mg(2+). L-glutamate-binding positions include Asn265–Gly266 and Gly266. Residue His270 coordinates Mg(2+). Residues His272 to Ser274 and Ser274 each bind ATP. L-glutamate is bound by residues Arg322, Glu328, and Arg340. ATP-binding residues include Arg340, Arg345, and Lys353. Glu358 contributes to the Mg(2+) binding site. Arg360 provides a ligand contact to L-glutamate. Tyr398 is subject to O-AMP-tyrosine.

The protein belongs to the glutamine synthetase family. Oligomer of 12 subunits arranged in the form of two hexameric ring. The cofactor is Mg(2+).

Its subcellular location is the cytoplasm. The enzyme catalyses L-glutamate + NH4(+) + ATP = L-glutamine + ADP + phosphate + H(+). With respect to regulation, the activity of this enzyme could be controlled by adenylation under conditions of abundant glutamine. Catalyzes the ATP-dependent biosynthesis of glutamine from glutamate and ammonia. The chain is Glutamine synthetase from Bradyrhizobium diazoefficiens (strain JCM 10833 / BCRC 13528 / IAM 13628 / NBRC 14792 / USDA 110).